A 219-amino-acid polypeptide reads, in one-letter code: Orotate phosphoribosyltransferase (219 aa).

Lysine 26 serves as a coordination point for 5-phospho-alpha-D-ribose 1-diphosphate. 34–35 (FF) contributes to the orotate binding site. 5-phospho-alpha-D-ribose 1-diphosphate contacts are provided by residues 72–73 (YK), arginine 98, lysine 99, lysine 102, histidine 104, and 124–132 (DDVITAGTA). Positions 128 and 156 each coordinate orotate.

The protein belongs to the purine/pyrimidine phosphoribosyltransferase family. PyrE subfamily. In terms of assembly, homodimer. It depends on Mg(2+) as a cofactor.

The catalysed reaction is orotidine 5'-phosphate + diphosphate = orotate + 5-phospho-alpha-D-ribose 1-diphosphate. The protein operates within pyrimidine metabolism; UMP biosynthesis via de novo pathway; UMP from orotate: step 1/2. Its function is as follows. Catalyzes the transfer of a ribosyl phosphate group from 5-phosphoribose 1-diphosphate to orotate, leading to the formation of orotidine monophosphate (OMP). This Xylella fastidiosa (strain Temecula1 / ATCC 700964) protein is Orotate phosphoribosyltransferase.